The following is a 364-amino-acid chain: tRNA-specific 2-thiouridylase MnmA 1 (364 aa).

ATP contacts are provided by residues 10 to 17 (GMSGGVDS) and Met-36. Cys-106 serves as the catalytic Nucleophile. An intrachain disulfide couples Cys-106 to Cys-204. Gly-130 is a binding site for ATP. Residues 154–156 (KDQ) form an interaction with tRNA region. The active-site Cysteine persulfide intermediate is the Cys-204. The tract at residues 310–311 (RY) is interaction with tRNA.

This sequence belongs to the MnmA/TRMU family.

It localises to the cytoplasm. The enzyme catalyses S-sulfanyl-L-cysteinyl-[protein] + uridine(34) in tRNA + AH2 + ATP = 2-thiouridine(34) in tRNA + L-cysteinyl-[protein] + A + AMP + diphosphate + H(+). Catalyzes the 2-thiolation of uridine at the wobble position (U34) of tRNA, leading to the formation of s(2)U34. This chain is tRNA-specific 2-thiouridylase MnmA 1, found in Thermoanaerobacter pseudethanolicus (strain ATCC 33223 / 39E) (Clostridium thermohydrosulfuricum).